A 379-amino-acid chain; its full sequence is Dual-specificity RNA methyltransferase RlmN (379 aa).

The active-site Proton acceptor is Glu-95. The Radical SAM core domain occupies 101–345 (EETRGTLCVS…TTVRKTRGDD (245 aa)). A disulfide bridge connects residues Cys-108 and Cys-350. Cys-115, Cys-119, and Cys-122 together coordinate [4Fe-4S] cluster. Residues 176 to 177 (GE), Ser-208, 230 to 232 (SLH), and Asn-307 each bind S-adenosyl-L-methionine. Cys-350 functions as the S-methylcysteine intermediate in the catalytic mechanism.

The protein belongs to the radical SAM superfamily. RlmN family. The cofactor is [4Fe-4S] cluster.

It is found in the cytoplasm. The enzyme catalyses adenosine(2503) in 23S rRNA + 2 reduced [2Fe-2S]-[ferredoxin] + 2 S-adenosyl-L-methionine = 2-methyladenosine(2503) in 23S rRNA + 5'-deoxyadenosine + L-methionine + 2 oxidized [2Fe-2S]-[ferredoxin] + S-adenosyl-L-homocysteine. It catalyses the reaction adenosine(37) in tRNA + 2 reduced [2Fe-2S]-[ferredoxin] + 2 S-adenosyl-L-methionine = 2-methyladenosine(37) in tRNA + 5'-deoxyadenosine + L-methionine + 2 oxidized [2Fe-2S]-[ferredoxin] + S-adenosyl-L-homocysteine. Functionally, specifically methylates position 2 of adenine 2503 in 23S rRNA and position 2 of adenine 37 in tRNAs. m2A2503 modification seems to play a crucial role in the proofreading step occurring at the peptidyl transferase center and thus would serve to optimize ribosomal fidelity. The sequence is that of Dual-specificity RNA methyltransferase RlmN from Burkholderia cenocepacia (strain ATCC BAA-245 / DSM 16553 / LMG 16656 / NCTC 13227 / J2315 / CF5610) (Burkholderia cepacia (strain J2315)).